Here is a 29-residue protein sequence, read N- to C-terminus: Beta-theraphotoxin-Gr1b (29 aa).

3 cysteine pairs are disulfide-bonded: Cys2–Cys16, Cys9–Cys21, and Cys15–Cys25. Leu29 bears the Leucine amide mark.

The protein belongs to the neurotoxin 30 (phrixotoxin) family. As to expression, expressed by the venom gland.

Its subcellular location is the secreted. Its function is as follows. Inhibits the voltage-gated sodium channels Nav1.1/SCN1A (IC(50)=360 nM), Nav1.2/SCN2A (IC(50)=600 nM), Nav1.3/SCN3A (IC(50)=1280), Nav1.4/SCN4A (IC(50)=330 nM), Nav1.6/SCN8A (IC(50)=1200 nM), Nav1.7/SCN9A (IC(50)=1-40 nM), and voltage-gated potassium channels Kv11.1/KCNH2 (IC(50)=4.8 uM). Induces analgesia in mammals. This analgesia is mediated by a non-opioid receptor related mechanism. The chain is Beta-theraphotoxin-Gr1b from Grammostola rosea (Chilean rose tarantula).